The following is a 498-amino-acid chain: Beta-1,3-glucosyltransferase (498 aa).

Residues 1-6 (MRPPAC) are Cytoplasmic-facing. A helical; Signal-anchor for type II membrane protein membrane pass occupies residues 7-27 (WWLLAPPALLALLTCSLAFGL). The Lumenal portion of the chain corresponds to 28-498 (ASEDTKKEVK…ETQKGFREEL (471 aa)). Residue Asn336 is glycosylated (N-linked (GlcNAc...) asparagine). Positions 495–498 (REEL) match the Prevents secretion from ER motif.

It belongs to the glycosyltransferase 31 family. In terms of tissue distribution, widely expressed, with highest levels in testis and uterus.

The protein localises to the endoplasmic reticulum membrane. It functions in the pathway protein modification; protein glycosylation. Its function is as follows. O-glucosyltransferase that transfers glucose toward fucose with a beta-1,3 linkage. Specifically glucosylates O-linked fucosylglycan on TSP type-1 domains of proteins, thereby contributing to elongation of O-fucosylglycan. This Homo sapiens (Human) protein is Beta-1,3-glucosyltransferase.